Consider the following 149-residue polypeptide: Peptide deformylase (149 aa).

Fe cation contacts are provided by cysteine 92 and histidine 134. Glutamate 135 is an active-site residue. Fe cation is bound at residue histidine 138.

This sequence belongs to the polypeptide deformylase family. Fe(2+) is required as a cofactor.

It carries out the reaction N-terminal N-formyl-L-methionyl-[peptide] + H2O = N-terminal L-methionyl-[peptide] + formate. Removes the formyl group from the N-terminal Met of newly synthesized proteins. Requires at least a dipeptide for an efficient rate of reaction. N-terminal L-methionine is a prerequisite for activity but the enzyme has broad specificity at other positions. In Buchnera aphidicola subsp. Cinara cedri (strain Cc), this protein is Peptide deformylase.